The chain runs to 838 residues: Envelope glycoprotein H (838 aa).

The N-terminal stretch at 1-18 (MGPGLWVVMGVLVGVAGG) is a signal peptide. Over 21-803 (TYWTEQIDPW…DTLPIATIAP (783 aa)) the chain is Virion surface. Residues Asn-73 and Asn-120 are each glycosylated (N-linked (GlcNAc...) asparagine; by host). Residues 171–190 (GLTFPRGDDGATERHPDGRR) are compositionally biased toward basic and acidic residues. The tract at residues 171–207 (GLTFPRGDDGATERHPDGRRNAPPPGPPAGTPRHPTT) is disordered. 2 N-linked (GlcNAc...) asparagine; by host glycosylation sites follow: Asn-208 and Asn-216. The cysteines at positions 258 and 429 are disulfide-linked. Residues 259–323 (DAALVRARYG…PAGPRYRVFV (65 aa)) form an interaction with gL region. N-linked (GlcNAc...) asparagine; by host glycosylation is found at Asn-332, Asn-437, Asn-670, and Asn-784. The chain crosses the membrane as a helical span at residues 804 to 824 (GFLAASALGVVMITAALAGIL). Over 825 to 838 (RVVRTCVPFLWRRE) the chain is Intravirion.

The protein belongs to the herpesviridae glycoprotein H family. Interacts with glycoprotein L (gL); this interaction is necessary for the correct processing and cell surface expression of gH. The heterodimer gH/gL seems to interact with gB trimers during fusion. Interacts with host integrins ITGAV/ITGB3 to mediate viral entry into epithelial cells. N-glycosylated, O-glycosylated, and sialylated.

The protein localises to the virion membrane. The protein resides in the host cell membrane. Its subcellular location is the host endosome membrane. In terms of biological role, the heterodimer glycoprotein H-glycoprotein L is required for the fusion of viral and plasma membranes leading to virus entry into the host cell. Following initial binding to host receptor, membrane fusion is mediated by the fusion machinery composed of gB and the heterodimer gH/gL. May also be involved in the fusion between the virion envelope and the outer nuclear membrane during virion morphogenesis. Interaction with host integrins ITGAV/ITGB3 triggers release of cytosolic Ca(2+) and FAK phosphorylation leading to efficient viral entry into host genital tract epithelial cells. This Human herpesvirus 2 (strain HG52) (HHV-2) protein is Envelope glycoprotein H.